A 218-amino-acid polypeptide reads, in one-letter code: Large ribosomal subunit protein uL3 (218 aa).

The protein belongs to the universal ribosomal protein uL3 family. In terms of assembly, part of the 50S ribosomal subunit. Forms a cluster with proteins L14 and L19.

Functionally, one of the primary rRNA binding proteins, it binds directly near the 3'-end of the 23S rRNA, where it nucleates assembly of the 50S subunit. The sequence is that of Large ribosomal subunit protein uL3 from Mycolicibacterium gilvum (strain PYR-GCK) (Mycobacterium gilvum (strain PYR-GCK)).